A 260-amino-acid chain; its full sequence is 3'-5' ssDNA/RNA exonuclease TatD (260 aa).

Residues Glu-92, His-128, and His-153 each contribute to the a divalent metal cation site.

Belongs to the metallo-dependent hydrolases superfamily. TatD-type hydrolase family. TatD subfamily. Monomer. Requires Mg(2+) as cofactor.

It localises to the cytoplasm. Its function is as follows. 3'-5' exonuclease that prefers single-stranded DNA and RNA. May play a role in the H(2)O(2)-induced DNA damage repair. In Pectobacterium carotovorum subsp. carotovorum (strain PC1), this protein is 3'-5' ssDNA/RNA exonuclease TatD.